A 161-amino-acid chain; its full sequence is Allophycocyanin alpha chain (161 aa).

The residue at position 71 (Asn71) is an N4-methylasparagine. Cys81 provides a ligand contact to (2R,3E)-phycocyanobilin.

The protein belongs to the phycobiliprotein family. In terms of assembly, heterodimer of an alpha and a beta chain. Post-translationally, contains one covalently linked phycocyanobilin chromophore.

The protein localises to the plastid. It is found in the chloroplast thylakoid membrane. Its function is as follows. Light-harvesting photosynthetic bile pigment-protein from the phycobiliprotein complex. Allophycocyanin has a maximum absorption at approximately 650 nanometers. The chain is Allophycocyanin alpha chain (apcA) from Pyropia haitanensis (Red seaweed).